A 158-amino-acid polypeptide reads, in one-letter code: Transcription factor BTF3 homolog 4 (158 aa).

In terms of domain architecture, NAC-A/B spans 33-98 (TADDKKLQSS…AETKQLTEML (66 aa)). Positions 125–158 (LDNKAPKAEDIDEEDDDVPDLVENFDEASKNEAN) are disordered. Positions 134–150 (DIDEEDDDVPDLVENFD) are enriched in acidic residues.

The protein belongs to the NAC-beta family.

The protein is Transcription factor BTF3 homolog 4 (btf3l4) of Danio rerio (Zebrafish).